Consider the following 38-residue polypeptide: Large ribosomal subunit protein bL36 (38 aa).

This sequence belongs to the bacterial ribosomal protein bL36 family.

The polypeptide is Large ribosomal subunit protein bL36 (Polynucleobacter necessarius subsp. necessarius (strain STIR1)).